A 147-amino-acid polypeptide reads, in one-letter code: UPF0306 protein YPK_3704 (147 aa).

Belongs to the UPF0306 family.

The chain is UPF0306 protein YPK_3704 from Yersinia pseudotuberculosis serotype O:3 (strain YPIII).